A 723-amino-acid chain; its full sequence is Polyribonucleotide nucleotidyltransferase (723 aa).

Asp-488 and Asp-494 together coordinate Mg(2+). One can recognise a KH domain in the interval 555-614 (PKIITLNIKPEKIKDVIGPGGKQINAIIEETGVKIDIEQDGTVYIASQDQAMNRKAIAII). The S1 motif domain maps to 624 to 692 (GEVYTGKVRR…HQGRVNLSRK (69 aa)). The segment at 692–723 (KALLEKKEQPEGDKKPQAEKKFYPKTKKPESK) is disordered. Over residues 693–723 (ALLEKKEQPEGDKKPQAEKKFYPKTKKPESK) the composition is skewed to basic and acidic residues.

This sequence belongs to the polyribonucleotide nucleotidyltransferase family. The cofactor is Mg(2+).

The protein localises to the cytoplasm. The enzyme catalyses RNA(n+1) + phosphate = RNA(n) + a ribonucleoside 5'-diphosphate. Functionally, involved in mRNA degradation. Catalyzes the phosphorolysis of single-stranded polyribonucleotides processively in the 3'- to 5'-direction. The sequence is that of Polyribonucleotide nucleotidyltransferase from Listeria welshimeri serovar 6b (strain ATCC 35897 / DSM 20650 / CCUG 15529 / CIP 8149 / NCTC 11857 / SLCC 5334 / V8).